The sequence spans 235 residues: Large ribosomal subunit protein uL1 (235 aa).

It belongs to the universal ribosomal protein uL1 family. In terms of assembly, part of the 50S ribosomal subunit.

Functionally, binds directly to 23S rRNA. The L1 stalk is quite mobile in the ribosome, and is involved in E site tRNA release. Its function is as follows. Protein L1 is also a translational repressor protein, it controls the translation of the L11 operon by binding to its mRNA. The sequence is that of Large ribosomal subunit protein uL1 from Citrobacter koseri (strain ATCC BAA-895 / CDC 4225-83 / SGSC4696).